Reading from the N-terminus, the 240-residue chain is DNA repair protein RecO (240 aa).

This sequence belongs to the RecO family.

Involved in DNA repair and RecF pathway recombination. This is DNA repair protein RecO from Xanthomonas euvesicatoria pv. vesicatoria (strain 85-10) (Xanthomonas campestris pv. vesicatoria).